We begin with the raw amino-acid sequence, 508 residues long: Photosystem II CP47 reaction center protein (508 aa).

A run of 6 helical transmembrane segments spans residues 21-36, 101-115, 140-156, 203-218, 237-252, and 457-472; these read SVHI…WAGS, IILA…MWHW, GIHL…FGAF, IAAG…FHLS, VLSS…AFVV, and CFAL…HGAR.

This sequence belongs to the PsbB/PsbC family. PsbB subfamily. In terms of assembly, PSII is composed of 1 copy each of membrane proteins PsbA, PsbB, PsbC, PsbD, PsbE, PsbF, PsbH, PsbI, PsbJ, PsbK, PsbL, PsbM, PsbT, PsbX, PsbY, PsbZ, Psb30/Ycf12, at least 3 peripheral proteins of the oxygen-evolving complex and a large number of cofactors. It forms dimeric complexes. The cofactor is Binds multiple chlorophylls. PSII binds additional chlorophylls, carotenoids and specific lipids..

It is found in the plastid. It localises to the chloroplast thylakoid membrane. One of the components of the core complex of photosystem II (PSII). It binds chlorophyll and helps catalyze the primary light-induced photochemical processes of PSII. PSII is a light-driven water:plastoquinone oxidoreductase, using light energy to abstract electrons from H(2)O, generating O(2) and a proton gradient subsequently used for ATP formation. This Mesostigma viride (Green alga) protein is Photosystem II CP47 reaction center protein.